Consider the following 342-residue polypeptide: Succinylglutamate desuccinylase (342 aa).

The Zn(2+) site is built by H64, E67, and H159. E222 is a catalytic residue.

The protein belongs to the AspA/AstE family. Succinylglutamate desuccinylase subfamily. Requires Zn(2+) as cofactor.

The enzyme catalyses N-succinyl-L-glutamate + H2O = L-glutamate + succinate. The protein operates within amino-acid degradation; L-arginine degradation via AST pathway; L-glutamate and succinate from L-arginine: step 5/5. Its function is as follows. Transforms N(2)-succinylglutamate into succinate and glutamate. The chain is Succinylglutamate desuccinylase from Burkholderia orbicola (strain MC0-3).